The primary structure comprises 329 residues: Chlorophyllase-1, chloroplastic (329 aa).

A chloroplast-targeting transit peptide spans 1 to 21 (MAAMVDAKPAASVQGTPLLAT). The GXSXG signature appears at 145–149 (GHSRG). Catalysis depends on Ser-147, which acts as the Nucleophile. Catalysis depends on charge relay system residues Asp-169 and His-242.

This sequence belongs to the AB hydrolase superfamily. Lipase family.

Its subcellular location is the plastid. It localises to the chloroplast. The catalysed reaction is a chlorophyll + H2O = a chlorophyllide + phytol + H(+). Its pathway is porphyrin-containing compound metabolism; chlorophyll degradation. Its function is as follows. Catalyzes the hydrolysis of ester bond in chlorophyll to yield chlorophyllide and phytol. The chain is Chlorophyllase-1, chloroplastic (CHLASE1) from Citrus sinensis (Sweet orange).